Reading from the N-terminus, the 311-residue chain is Probable manganese-dependent inorganic pyrophosphatase (311 aa).

Residues His-9, Asp-13, Asp-15, Asp-77, His-99, and Asp-151 each contribute to the Mn(2+) site.

The protein belongs to the PPase class C family. Requires Mn(2+) as cofactor.

The protein localises to the cytoplasm. The catalysed reaction is diphosphate + H2O = 2 phosphate + H(+). The protein is Probable manganese-dependent inorganic pyrophosphatase of Streptococcus equi subsp. zooepidemicus (strain MGCS10565).